The primary structure comprises 521 residues: MSSQSYYMNDLDDLRSLESSTLNKKDTAINELNPEQNDTRRSTDLLLEDKYGIQTGFSKYWKKCTYGIREYCKFIGPGFLIAVAYIDPGNYSTDLDAGSRFQYKLLFIVFLSNLFAVYLQSLCIRLGSVTGMDLARNCREHYNRYICWSFYVLAEIAIIATDIAEVIGTAVALKILMHIPLVAGVVITILDVLLVLIAWRPEGSMLSVRIFETAVALLVLVVAISFAVVLGRVHIGGAGTVFKGFLPSSTVFSREGLYSSIGILGATVMPHSLFLGSGLVQTRLRDLDVRRGNYTPVGDCSDYRPTHETIKHSLTYSIVEVALSLFTFALFTNSSILIVAGAVFYNTSGADTSDLFSIYDLLKEYVSISCGRLFAVALLFSGMSAGYVCTIAGQIVSEGYINWNLRPWLRRVITRAIAIIPCLVVSAAVGQSGLNQVLNASQVCLSILLPFLTFPLVMFTCSRKVMRVVSDSTNEETGQLIRETHDYSLGWTMTIVTWAIWLFLTALNLLLIVWLGMGVSF.

Ser-42 is subject to Phosphoserine. A Phosphothreonine modification is found at Thr-43. 12 helical membrane-spanning segments follow: residues 71–91 (YCKF…PGNY), 104–124 (KLLF…SLCI), 152–172 (VLAE…TAVA), 179–199 (IPLV…LIAW), 210–230 (IFET…AVVL), 233–253 (VHIG…TVFS), 260–280 (SIGI…SGLV), 325–345 (LFTF…AVFY), 373–393 (LFAV…TIAG), 417–437 (IAII…LNQV), 440–460 (ASQV…VMFT), and 495–515 (IVTW…IVWL).

Belongs to the NRAMP family.

Its subcellular location is the endoplasmic reticulum membrane. Transports manganese ions into the cell. Regulates cell morphogenesis through control of manganese homeostasis. This is Manganese transporter pdt1 (pdt1) from Schizosaccharomyces pombe (strain 972 / ATCC 24843) (Fission yeast).